A 274-amino-acid polypeptide reads, in one-letter code: Proteasome subunit beta type-5-A (274 aa).

A propeptide spans 1–57 (removed in mature form); that stretch reads MKLDTSGFETSMPMIGFGSSSDMLDELSSVPSFDLPRTKEFDGFQKKAKDMLKHAKG. T58 functions as the Nucleophile in the catalytic mechanism.

This sequence belongs to the peptidase T1B family. Component of the 20S core complex of the 26S proteasome. The 26S proteasome is composed of a core protease (CP), known as the 20S proteasome, capped at one or both ends by the 19S regulatory particle (RP/PA700). The 20S proteasome core is composed of 28 subunits that are arranged in four stacked rings, resulting in a barrel-shaped structure. The two end rings are each formed by seven alpha subunits, and the two central rings are each formed by seven beta subunits. The catalytic chamber with the active sites is on the inside of the barrel. Ubiquitous low levels, higher expression in siliques and flowers.

The protein localises to the cytoplasm. It is found in the nucleus. It carries out the reaction Cleavage of peptide bonds with very broad specificity.. Functionally, the proteasome is a multicatalytic proteinase complex which is characterized by its ability to cleave peptides with Arg, Phe, Tyr, Leu, and Glu adjacent to the leaving group at neutral or slightly basic pH. The proteasome has an ATP-dependent proteolytic activity. This chain is Proteasome subunit beta type-5-A (PBE1), found in Arabidopsis thaliana (Mouse-ear cress).